The primary structure comprises 651 residues: J domain-containing protein required for chloroplast accumulation response 1 (651 aa).

Over residues 1–17 the composition is skewed to polar residues; the sequence is MQTLPSSETVLLGSNSA. Disordered stretches follow at residues 1–56, 114–138, 156–176, 250–291, and 308–526; these read MQTL…TRHS, GSRI…QFSL, LNKN…SKAD, KLGK…TDLK, and KPLD…IDEP. Phosphoserine is present on serine 56. Residues 126–137 are compositionally biased toward low complexity; sequence SSSGTSSPSQFS. Composition is skewed to basic and acidic residues over residues 250 to 259, 281 to 291, 337 to 357, 405 to 416, 441 to 456, and 488 to 497; these read KLGKNEEGDG, TKEEKTETDLK, IFHE…EVRK, VGKDGVKGKVSD, RAKE…DGSN, and QKKDSDRESM. The stretch at 532-562 forms a coiled coil; it reads DVEDITQDENKMEEANKDAEEIKNIDAKIRK. The J domain maps to 586–651; that stretch reads SGWKPVPLMD…WDHFNTLGPV (66 aa).

As to expression, expressed in leaves and stems, but not in roots.

The protein resides in the cytoplasm. Functionally, required for chloroplast photorelocation movement; chloroplast accumulation upon low blue light and for chloroplast movement to the bottom of cells in darkness, by modulating chloroplast actin (Cp-actin) filaments distribution, appearance and disappearance. May mediate a slight resistance to aluminum in root hair cells. The protein is J domain-containing protein required for chloroplast accumulation response 1 (JAC1) of Arabidopsis thaliana (Mouse-ear cress).